The chain runs to 255 residues: MEKCEGIVIRQTSYRESDKIVRMYTREFGKIGVVARGAKKTKSRLAAVTQLFTNGYFTFFGGNGLGTLQQGEVIENFSSIQQDIFMTAYATYVCELLDKATEERQPNPYLYELTFQILRDIDEGYDPQILTQIYEMKMLPVLGLYPTMDKCAICGETTGHFDFSTRSNGIICHRCFEKDRYRMHLPENVVKLLRLFFIFQLDRLGNIDVKQETKDWLQKAIDTYYDENSGLYLKSRKFLRDMDKWENMLKKDSDD.

The protein belongs to the RecO family.

In terms of biological role, involved in DNA repair and RecF pathway recombination. This Listeria welshimeri serovar 6b (strain ATCC 35897 / DSM 20650 / CCUG 15529 / CIP 8149 / NCTC 11857 / SLCC 5334 / V8) protein is DNA repair protein RecO.